Reading from the N-terminus, the 386-residue chain is Phosphoglycerate kinase (386 aa).

Substrate contacts are provided by residues 21–23 (DLN), arginine 36, 59–62 (HLGR), arginine 112, and arginine 145. ATP is bound by residues lysine 196, glutamate 313, and 339 to 342 (GGDT).

It belongs to the phosphoglycerate kinase family. In terms of assembly, monomer.

The protein localises to the cytoplasm. The enzyme catalyses (2R)-3-phosphoglycerate + ATP = (2R)-3-phospho-glyceroyl phosphate + ADP. It functions in the pathway carbohydrate degradation; glycolysis; pyruvate from D-glyceraldehyde 3-phosphate: step 2/5. The chain is Phosphoglycerate kinase from Haemophilus influenzae (strain 86-028NP).